Reading from the N-terminus, the 261-residue chain is Protein OSB1, mitochondrial (261 aa).

Residues 1-28 (MNTFFKLGSLIQRTASQISSSFPKSRFF) constitute a mitochondrion transit peptide. The SSB domain occupies 55-155 (VNSVSLMGFV…VKVAEVNYVA (101 aa)). Residues 189–238 (WQVFFSNPYDWWDNRRNKKNPKQPDFKHKDTGEALWLCSDLPDWITRRLE) form a PDF region region.

In terms of tissue distribution, expressed in root elongation zone and in gametophytic cells.

The protein localises to the mitochondrion. Its function is as follows. Regulates mitochondrial DNA recombination. Represses homologous recombination, preventing mitochondrial genome instability and unbalanced transmission of alternative mtDNA configurations. Binds preferentially single-stranded DNA. Does not bind to RNA. The sequence is that of Protein OSB1, mitochondrial (OSB1) from Arabidopsis thaliana (Mouse-ear cress).